Reading from the N-terminus, the 311-residue chain is Methionyl-tRNA formyltransferase (311 aa).

Serine 109–proline 112 contributes to the (6S)-5,6,7,8-tetrahydrofolate binding site.

It belongs to the Fmt family.

The enzyme catalyses L-methionyl-tRNA(fMet) + (6R)-10-formyltetrahydrofolate = N-formyl-L-methionyl-tRNA(fMet) + (6S)-5,6,7,8-tetrahydrofolate + H(+). Attaches a formyl group to the free amino group of methionyl-tRNA(fMet). The formyl group appears to play a dual role in the initiator identity of N-formylmethionyl-tRNA by promoting its recognition by IF2 and preventing the misappropriation of this tRNA by the elongation apparatus. The sequence is that of Methionyl-tRNA formyltransferase from Staphylococcus aureus (strain USA300).